Reading from the N-terminus, the 340-residue chain is Probable quinone oxidoreductase (340 aa).

Belongs to the zinc-containing alcohol dehydrogenase family. Quinone oxidoreductase subfamily.

The enzyme catalyses 2 a quinone + NADPH + H(+) = 2 a 1,4-benzosemiquinone + NADP(+). The polypeptide is Probable quinone oxidoreductase (Leishmania amazonensis).